The primary structure comprises 508 residues: Anthranilate synthase component 1 (508 aa).

Residues serine 49 and 282-284 (PYM) each bind L-tryptophan. Residue 317–318 (GT) participates in chorismate binding. A Mg(2+)-binding site is contributed by glutamate 344. Chorismate-binding positions include tyrosine 432, arginine 452, 466-468 (GAG), and glycine 468. Glutamate 481 provides a ligand contact to Mg(2+).

This sequence belongs to the anthranilate synthase component I family. Heterotetramer consisting of two non-identical subunits: a beta subunit (TrpG) and a large alpha subunit (TrpE). It depends on Mg(2+) as a cofactor.

It catalyses the reaction chorismate + L-glutamine = anthranilate + pyruvate + L-glutamate + H(+). Its pathway is amino-acid biosynthesis; L-tryptophan biosynthesis; L-tryptophan from chorismate: step 1/5. With respect to regulation, feedback inhibited by tryptophan. Functionally, part of a heterotetrameric complex that catalyzes the two-step biosynthesis of anthranilate, an intermediate in the biosynthesis of L-tryptophan. In the first step, the glutamine-binding beta subunit (TrpG) of anthranilate synthase (AS) provides the glutamine amidotransferase activity which generates ammonia as a substrate that, along with chorismate, is used in the second step, catalyzed by the large alpha subunit of AS (TrpE) to produce anthranilate. In the absence of TrpG, TrpE can synthesize anthranilate directly from chorismate and high concentrations of ammonia. The sequence is that of Anthranilate synthase component 1 (trpE) from Bacillus caldotenax.